Here is a 1238-residue protein sequence, read N- to C-terminus: uncharacterized protein (1238 aa).

7 disordered regions span residues 22-83 (LQSA…QEHL), 96-150 (SSRQ…IASP), 169-250 (FEPD…HQML), 264-694 (QLNS…AAMV), 739-915 (TKAA…SVPE), 936-955 (THSA…APHE), and 1057-1089 (PKIS…QCSS). Over residues 35–49 (QPPNQQPHQTQQQQQ) the composition is skewed to low complexity. Polar residues predominate over residues 58–72 (PSIQNLTTNATPTST). Low complexity predominate over residues 73–83 (QLQQQQQQEHL). Residues 96 to 110 (SSRQNQGAPSGNLSN) show a composition bias toward polar residues. The span at 125 to 145 (SVSGNTNHTGSNSSSNSGSNN) shows a compositional bias: low complexity. Polar residues predominate over residues 188–204 (SASSASKLPTHNVQQQH). Composition is skewed to low complexity over residues 272–287 (SYQH…QSHP), 309–334 (PLLT…SSQH), and 393–406 (SNEE…NSSN). The span at 433-450 (SKPQHPQQAANLNNSCSP) shows a compositional bias: polar residues. S453 carries the phosphoserine modification. Polar residues predominate over residues 463 to 472 (PFSTQKQSQT). The span at 523–536 (TEQHRMQQDDEPPK) shows a compositional bias: basic and acidic residues. Low complexity-rich tracts occupy residues 549–570 (QSNS…SQSS) and 632–641 (TTAAVAAPPA). Position 642 is a phosphothreonine (T642). Residues 678-688 (ERISSPEKPAE) show a composition bias toward basic and acidic residues. Residues S682, S749, and S753 each carry the phosphoserine modification. The segment covering 755-764 (IPQSRSTSTP) has biased composition (polar residues). Phosphoserine occurs at positions 793 and 799. Positions 832–860 (STSAAAAAALAARQLSEAASATKSKPAAG) are enriched in low complexity. Over residues 861–874 (AKKKNAGVKGKKGS) the composition is skewed to basic residues. Positions 937–947 (HSAEDVNEKQT) are enriched in basic and acidic residues. Over residues 1071–1089 (DSSISYSDDPNESRSQCSS) the composition is skewed to polar residues. The C2HC pre-PHD-type; degenerate zinc-finger motif lies at 1089–1131 (SVDLLDCSTESKFVETFRGMGKTSENGFEVWLHEDCAVWSNDI). S1099 carries the phosphoserine modification. A PHD-type zinc finger spans residues 1151 to 1199 (YQCVLCQQTGASICCFQRCCKAAAHVPCGRSANWSLSEEDRKVYCHLHR).

This is an uncharacterized protein from Drosophila melanogaster (Fruit fly).